A 271-amino-acid polypeptide reads, in one-letter code: Aquaporin-2 (271 aa).

Residues 1-11 (MWELRSIAFSR) are Cytoplasmic-facing. A helical membrane pass occupies residues 12–32 (AVLAEFLATLLFVFFGLGSAL). The Extracellular portion of the chain corresponds to 33–40 (QWASSPPS). The chain crosses the membrane as a helical span at residues 41 to 59 (VLQIAVAFGLGIGILVQAL). Residues 60–64 (GHVSG) are Cytoplasmic-facing. The segment at residues 65-74 (AHINPAVTVA) is an intramembrane region (discontinuously helical). An NPA 1 motif is present at residues 68–70 (NPA). Residues 75–85 (CLVGCHVSFLR) lie on the Cytoplasmic side of the membrane. A helical transmembrane segment spans residues 86-107 (AAFYVAAQLLGAVAGAAILHEI). Residues 108–127 (TPVEIRGDLAVNALHNNATA) lie on the Extracellular side of the membrane. N-linked (GlcNAc...) asparagine glycosylation is present at Asn124. Residues 128–148 (GQAVTVELFLTMQLVLCIFAS) form a helical membrane-spanning segment. At 149 to 156 (TDERRGDN) the chain is on the cytoplasmic side. The chain crosses the membrane as a helical span at residues 157 to 176 (LGSPALSIGFSVTLGHLLGI). Topologically, residues 177-180 (YFTG) are extracellular. The discontinuously helical intramembrane region spans 181-193 (CSMNPARSLAPAV). Positions 184 to 186 (NPA) match the NPA 2 motif. Topologically, residues 194 to 201 (VTGKFDDH) are extracellular. Residues 202 to 222 (WVFWIGPLVGAIIGSLLYNYL) traverse the membrane as a helical segment. Residues 223–271 (LFPSAKSLQERLAVLKGLEPDTDWEEREVRRRQSVELHSPQSLPRGSKA) lie on the Cytoplasmic side of the membrane. Residues 251-271 (VRRRQSVELHSPQSLPRGSKA) form a disordered region. Ser256, Ser261, Ser264, and Ser269 each carry phosphoserine. Residues 261–271 (SPQSLPRGSKA) show a composition bias toward polar residues.

Belongs to the MIP/aquaporin (TC 1.A.8) family. In terms of assembly, homotetramer. Post-translationally, ser-256 phosphorylation is necessary and sufficient for expression at the apical membrane. Endocytosis is not phosphorylation-dependent. In terms of processing, N-glycosylated. Detected in kidney, in cortical and the medullary collecting tubules (at protein level). Detected in kidney medulla and cortex.

It is found in the apical cell membrane. It localises to the basolateral cell membrane. Its subcellular location is the cell membrane. The protein resides in the cytoplasmic vesicle membrane. The protein localises to the golgi apparatus. It is found in the trans-Golgi network membrane. The catalysed reaction is H2O(in) = H2O(out). It catalyses the reaction glycerol(in) = glycerol(out). Forms a water-specific channel that provides the plasma membranes of renal collecting duct with high permeability to water, thereby permitting water to move in the direction of an osmotic gradient. Plays an essential role in renal water homeostasis. Could also be permeable to glycerol. The chain is Aquaporin-2 from Rattus norvegicus (Rat).